The sequence spans 110 residues: Phosphoribosyl-ATP pyrophosphatase (110 aa).

It belongs to the PRA-PH family.

The protein resides in the cytoplasm. The enzyme catalyses 1-(5-phospho-beta-D-ribosyl)-ATP + H2O = 1-(5-phospho-beta-D-ribosyl)-5'-AMP + diphosphate + H(+). The protein operates within amino-acid biosynthesis; L-histidine biosynthesis; L-histidine from 5-phospho-alpha-D-ribose 1-diphosphate: step 2/9. This is Phosphoribosyl-ATP pyrophosphatase from Clostridium botulinum (strain ATCC 19397 / Type A).